A 126-amino-acid polypeptide reads, in one-letter code: Type II methyltransferase M.HgiGI (126 aa).

The SAM-dependent MTase C5-type domain occupies 1–126 (MKTIDLFAGC…ARLSKIHQQA (126 aa)). Residue Cys75 is part of the active site.

The protein belongs to the class I-like SAM-binding methyltransferase superfamily. C5-methyltransferase family.

The catalysed reaction is a 2'-deoxycytidine in DNA + S-adenosyl-L-methionine = a 5-methyl-2'-deoxycytidine in DNA + S-adenosyl-L-homocysteine + H(+). In terms of biological role, a methylase, recognizes the double-stranded sequence 5'-GRCGYC-3', methylates C-? on both strands, and protects the DNA from cleavage by the HgiEI endonuclease. This Herpetosiphon aurantiacus (Herpetosiphon giganteus) protein is Type II methyltransferase M.HgiGI.